The primary structure comprises 361 residues: tRNA 2-selenouridine synthase (361 aa).

One can recognise a Rhodanese domain in the interval 11 to 134 (LLADTPLIDV…LRQTAIQATW (124 aa)). Cys94 (S-selanylcysteine intermediate) is an active-site residue.

It belongs to the SelU family. In terms of assembly, monomer.

The catalysed reaction is 5-methylaminomethyl-2-thiouridine(34) in tRNA + selenophosphate + (2E)-geranyl diphosphate + H2O + H(+) = 5-methylaminomethyl-2-selenouridine(34) in tRNA + (2E)-thiogeraniol + phosphate + diphosphate. It catalyses the reaction 5-methylaminomethyl-2-thiouridine(34) in tRNA + (2E)-geranyl diphosphate = 5-methylaminomethyl-S-(2E)-geranyl-thiouridine(34) in tRNA + diphosphate. It carries out the reaction 5-methylaminomethyl-S-(2E)-geranyl-thiouridine(34) in tRNA + selenophosphate + H(+) = 5-methylaminomethyl-2-(Se-phospho)selenouridine(34) in tRNA + (2E)-thiogeraniol. The enzyme catalyses 5-methylaminomethyl-2-(Se-phospho)selenouridine(34) in tRNA + H2O = 5-methylaminomethyl-2-selenouridine(34) in tRNA + phosphate. Its function is as follows. Involved in the post-transcriptional modification of the uridine at the wobble position (U34) of tRNA(Lys), tRNA(Glu) and tRNA(Gln). Catalyzes the conversion of 2-thiouridine (S2U-RNA) to 2-selenouridine (Se2U-RNA). Acts in a two-step process involving geranylation of 2-thiouridine (S2U) to S-geranyl-2-thiouridine (geS2U) and subsequent selenation of the latter derivative to 2-selenouridine (Se2U) in the tRNA chain. The protein is tRNA 2-selenouridine synthase of Salmonella schwarzengrund (strain CVM19633).